A 438-amino-acid polypeptide reads, in one-letter code: MSCSKGLSQSLKEDRISQLPDPLLTQILNLLPTEEAVKTSVLSTRWRTLWLWVPNLELSFSKFPCFNAFLSFGNLFFDSDRASCVESLKLYLDGNDASYLKPWVDALVKRKIQRLYVRRTLGGYSHVMPLSLYVCDSLVSLRLYRLSLVDAEFVSLPCLKILRLKDIVFHNETTFERLVSSCPVLEELKIDVVWNDGNVYKVHSRSLKRFCFRSSSLRFDESVPGVVVDAPLLCCLIIDDSVSESFVVTDLESNAKFDISLCFRLWRFDEAKRSIINMFLAWISRVRDMKICAHTFKLIHRYSESSPLPRFGYMSSLYVTLNASELEWFPIFLRSSPNLKSLILERSGSSHQLSRKAMERVSMSSVPECLLTSLEFVEFKAPICGLGPEMMLVWYFLKNSPTLKKLTLPLKSHSTKDDFFKKLLEIPRCSTECEIVIL.

The F-box domain occupies 13 to 59 (EDRISQLPDPLLTQILNLLPTEEAVKTSVLSTRWRTLWLWVPNLELS). 4 LRR repeats span residues 135–166 (CDSL…RLKD), 167–192 (IVFH…KIDV), 235–261 (CLII…DISL), and 318–346 (YVTL…ILER). Positions 362–409 (SMSSVPECLLTSLEFVEFKAPICGLGPEMMLVWYFLKNSPTLKKLTLP) constitute an FBD domain.

This chain is Putative F-box/FBD/LRR-repeat protein At2g05300, found in Arabidopsis thaliana (Mouse-ear cress).